The sequence spans 459 residues: Sensor histidine kinase SpaK (459 aa).

At 1-18 (MGIGFKGRKTLLRELVKY) the chain is on the cytoplasmic side. Residues 19–39 (MVTLCISLVVLALLYIFINTI) traverse the membrane as a helical segment. Residues 40 to 155 (AMNTGFSHPA…RKYLPNYELT (116 aa)) lie on the Extracellular side of the membrane. A helical membrane pass occupies residues 156-176 (SICILIILLIIVISIITTYFA). Over 177 to 459 (NRLRKHFETL…VRVKIPLRNE (283 aa)) the chain is Cytoplasmic. The Histidine kinase domain maps to 244-458 (ALAHEIKIPI…EVRVKIPLRN (215 aa)). His247 carries the phosphohistidine; by autocatalysis modification.

The protein resides in the cell membrane. The enzyme catalyses ATP + protein L-histidine = ADP + protein N-phospho-L-histidine.. Functionally, member of the two-component regulatory system SpaK/SpaR involved in the regulation of the biosynthesis of lantibiotic subtilin. SpaK may function as a membrane-associated protein kinase that phosphorylates SpaR in response to environmental signals. In Bacillus subtilis, this protein is Sensor histidine kinase SpaK (spaK).